The sequence spans 110 residues: Large ribosomal subunit protein uL22 (110 aa).

This sequence belongs to the universal ribosomal protein uL22 family. As to quaternary structure, part of the 50S ribosomal subunit.

In terms of biological role, this protein binds specifically to 23S rRNA; its binding is stimulated by other ribosomal proteins, e.g. L4, L17, and L20. It is important during the early stages of 50S assembly. It makes multiple contacts with different domains of the 23S rRNA in the assembled 50S subunit and ribosome. Its function is as follows. The globular domain of the protein is located near the polypeptide exit tunnel on the outside of the subunit, while an extended beta-hairpin is found that lines the wall of the exit tunnel in the center of the 70S ribosome. In Shewanella baltica (strain OS223), this protein is Large ribosomal subunit protein uL22.